Here is a 596-residue protein sequence, read N- to C-terminus: MDAHDLFRRLGVGAKFDLRRFSADAARFQIGKRKYDFDSSEVLQGLDFFGNKKPVPGDCGALRTHQELPDEEKTEESQIERKKQNRKKKKITSEITSEEEVSTIQWISSVEAKIEDKNVKRKNKLTSGKLEQLRKEKLNFFRNKHKIHVQGTDLPDPIATFQQLDQEYKINSRLLQNILDAGFQTPTPIQMQAIPVMLHGRELLASAPTGSGKTLAFSIPILMHLKQPTNKGFRALIISPTRELASQIHRELVKLSEGTGFRIHMIHKAAVAAKKFGPKSSKKFDILVTTPNRLIYLLKQDPPGIDLTSVEWLVVDESDKLFEDGKTGFRDQLASIFLACTSHKVKRAMFSATFAYDVEQWCRLNLDSVITVSVGARNSAVETVEQELLFVGSETGKLLAMRELVKKGFNPPVLVFVQSIERAKELFHELIYEGINVDVIHADRTQQQRDNTVHSFRAGKIWVLICTALLARGIDFKGVNLVINYDFPTSSVEYIHRIGRTGRAGHKGKAVTFFTEDDKPLLRSVANVIQQAGCPVPEYIKGFQKLLSKQKKKMIKKPLERESISTTPKYFLEKAKDKRKKVTGQNKKKVAPEDKS.

An N6-acetyllysine modification is found at Lys-15. At Ser-39 the chain carries Phosphoserine. Positions 68-94 (LPDEEKTEESQIERKKQNRKKKKITSE) are disordered. A Q motif motif is present at residues 163 to 191 (QLDQEYKINSRLLQNILDAGFQTPTPIQM). One can recognise a Helicase ATP-binding domain in the interval 194 to 372 (IPVMLHGREL…RLNLDSVITV (179 aa)). 207–214 (APTGSGKT) contributes to the ATP binding site. The DEAD box signature appears at 316 to 319 (DESD). The Helicase C-terminal domain occupies 383–544 (TVEQELLFVG…PVPEYIKGFQ (162 aa)). Residues 575 to 596 (AKDKRKKVTGQNKKKVAPEDKS) form a disordered region. Over residues 577 to 589 (DKRKKVTGQNKKK) the composition is skewed to basic residues.

This sequence belongs to the DEAD box helicase family. DDX52/ROK1 subfamily.

The protein localises to the nucleus. It is found in the nucleolus. The enzyme catalyses ATP + H2O = ADP + phosphate + H(+). The sequence is that of Probable ATP-dependent RNA helicase DDX52 (DDX52) from Bos taurus (Bovine).